The primary structure comprises 231 residues: Large ribosomal subunit protein uL1 (231 aa).

The protein belongs to the universal ribosomal protein uL1 family. In terms of assembly, part of the 50S ribosomal subunit.

In terms of biological role, binds directly to 23S rRNA. The L1 stalk is quite mobile in the ribosome, and is involved in E site tRNA release. Its function is as follows. Protein L1 is also a translational repressor protein, it controls the translation of the L11 operon by binding to its mRNA. The chain is Large ribosomal subunit protein uL1 from Cellvibrio japonicus (strain Ueda107) (Pseudomonas fluorescens subsp. cellulosa).